An 836-amino-acid chain; its full sequence is Enhancer of polycomb homolog 1 (836 aa).

Lysine 319 participates in a covalent cross-link: Glycyl lysine isopeptide (Lys-Gly) (interchain with G-Cter in SUMO2). Disordered stretches follow at residues 335–360 (KRKY…SPAA) and 372–401 (YDFP…PDGP). Residues 346 to 360 (PSSAAATPQQTSPAA) show a composition bias toward low complexity. Position 539 is a phosphoserine (serine 539). Residue lysine 673 forms a Glycyl lysine isopeptide (Lys-Gly) (interchain with G-Cter in SUMO2) linkage. The segment at 802–829 (VPSSSSVDSVPRENHESEKPALNNIADN) is disordered. The segment covering 811–820 (VPRENHESEK) has biased composition (basic and acidic residues).

This sequence belongs to the enhancer of polycomb family. In terms of assembly, component of the NuA4 histone acetyltransferase complex which contains the catalytic subunit KAT5/TIP60 and the subunits EP400, TRRAP/PAF400, BRD8/SMAP, EPC1, DMAP1/DNMAP1, RUVBL1/TIP49, RUVBL2, ING3, actin, ACTL6A/BAF53A, MORF4L1/MRG15, MORF4L2/MRGX, MRGBP, YEATS4/GAS41, VPS72/YL1 and MEAF6. KAT5/TIP60, EPC1, and ING3 together constitute a minimal HAT complex termed Piccolo NuA4. Component of a NuA4-related complex which contains EP400, TRRAP/PAF400, SRCAP, BRD8/SMAP, EPC1, DMAP1/DNMAP1, RUVBL1/TIP49, RUVBL2, actin, ACTL6A/BAF53A, VPS72 and YEATS4/GAS41. Interacts with TRIM27. Interacts with MBTD1; interaction is direct and promotes recruitment of MBTD1 into the NuA4 histone acetyltransferase complex.

Its subcellular location is the nucleus. It is found in the cytoplasm. Its function is as follows. Component of the NuA4 histone acetyltransferase (HAT) complex, a multiprotein complex involved in transcriptional activation of select genes principally by acetylation of nucleosomal histones H4 and H2A. The NuA4 complex plays a direct role in repair of DNA double-strand breaks (DSBs) by promoting homologous recombination (HR). The NuA4 complex is also required for spermatid development by promoting acetylation of histones: histone acetylation is required for histone replacement during the transition from round to elongating spermatids. In the NuA4 complex, EPC1 is required to recruit MBTD1 into the complex. The sequence is that of Enhancer of polycomb homolog 1 from Homo sapiens (Human).